The following is a 147-amino-acid chain: Hemoglobin subunit beta (147 aa).

The 145-residue stretch at 3–147 folds into the Globin domain; it reads EWTDFERATI…VVSSLGRQYH (145 aa). Heme b-binding residues include His-64 and His-93.

The protein belongs to the globin family. As to quaternary structure, hb 1 is a heterotetramer of two alpha-1 and two beta chains. Hb 2 is a heterotetramer of two alpha-2 and two beta chains. In terms of tissue distribution, red blood cells.

In terms of biological role, involved in oxygen transport from gills to the various peripheral tissues. This chain is Hemoglobin subunit beta (hbb), found in Cottoperca gobio (Frogmouth).